A 415-amino-acid chain; its full sequence is Casein kinase I isoform delta (415 aa).

The Protein kinase domain occupies 9–277 (YRLGRKIGSG…YLRQLFRNLF (269 aa)). ATP is bound by residues 15-23 (IGSGSFGDI) and K38. Residue D128 is the Proton acceptor of the active site. The centrosomal localization signal (CLS) stretch occupies residues 278–364 (HRQGFSYDYV…TSPRPVSGME (87 aa)). Basic and acidic residues predominate over residues 301 to 315 (ADDAERERRDREERL). The segment at 301 to 415 (ADDAERERRD…SSGLQSVVHR (115 aa)) is disordered. The autoinhibitory stretch occupies residues 317 to 342 (HSRNPATRGLPSTASGRLRGTQEVAP). 2 positions are modified to phosphoserine: S328 and S331. Residues 347 to 358 (TPTSHTANTSPR) are compositionally biased toward polar residues. S370 carries the post-translational modification Phosphoserine. R375 carries the post-translational modification Omega-N-methylarginine. Residues 380-400 (NVSSSDLTGRQDTSRMSTSQI) are compositionally biased toward polar residues. Residues S382, S383, S384, P401, S407, and S411 each carry the phosphoserine modification.

It belongs to the protein kinase superfamily. CK1 Ser/Thr protein kinase family. Casein kinase I subfamily. As to quaternary structure, monomer. Component of the circadian core oscillator, which includes the CRY proteins, CLOCK, or NPAS2, BMAL1 or BMAL2, CSNK1D and/or CSNK1E, TIMELESS and the PER proteins. Interacts directly with PER1 and PER2 which may lead to their degradation. Interacts with MAP1A. Interacts with MAPT/TAU, DBNDD2, AIB1/NCOA3 and ESR1. Interacts with AKAP9/AKAP450; this interaction promotes centrosomal subcellular location. Binds to tubulins in mitotic cells upon DNA damage. Interacts with GJA1. Interacts with SNAPIN. Interacts with DNMT1. Interacts with DDX3X; this interaction enhances CSNK1D kinase activity in vitro, but it is unclear whether this interaction is physiologically relevant. Interacts with FAM83A, FAM83B, FAM83E and FAM83H (via DUF1669). Autophosphorylated on serine and threonine residues; this autophosphorylation represses activity. Reactivated by phosphatase-mediated dephosphorylation. May be dephosphorylated by PP1. As to expression, expressed ubiquitously. However, kinase activity is not uniform, with highest kinase activity in splenocytes.

Its subcellular location is the cytoplasm. It is found in the nucleus. The protein localises to the cytoskeleton. The protein resides in the microtubule organizing center. It localises to the centrosome. Its subcellular location is the perinuclear region. It is found in the cell membrane. The protein localises to the spindle. The protein resides in the golgi apparatus. The catalysed reaction is L-seryl-[protein] + ATP = O-phospho-L-seryl-[protein] + ADP + H(+). It carries out the reaction L-threonyl-[protein] + ATP = O-phospho-L-threonyl-[protein] + ADP + H(+). The enzyme catalyses L-seryl-[tau protein] + ATP = O-phospho-L-seryl-[tau protein] + ADP + H(+). It catalyses the reaction L-threonyl-[tau protein] + ATP = O-phospho-L-threonyl-[tau protein] + ADP + H(+). Exhibits substrate-dependent heparin activation. Drug-mediated inhibition leads to a delay of the oscillations with the magnitude of this effect dependent upon the timing of drug administration. Inhibited by phosphorylation. Essential serine/threonine-protein kinase that regulates diverse cellular growth and survival processes including Wnt signaling, DNA repair and circadian rhythms. It can phosphorylate a large number of proteins. Casein kinases are operationally defined by their preferential utilization of acidic proteins such as caseins as substrates. Phosphorylates connexin-43/GJA1, MAP1A, SNAPIN, MAPT/TAU, TOP2A, DCK, HIF1A, EIF6, p53/TP53, DVL2, DVL3, ESR1, AIB1/NCOA3, DNMT1, PKD2, YAP1, PER1 and PER2. Central component of the circadian clock. In balance with PP1, determines the circadian period length through the regulation of the speed and rhythmicity of PER1 and PER2 phosphorylation. Controls PER1 and PER2 nuclear transport and degradation. YAP1 phosphorylation promotes its SCF(beta-TRCP) E3 ubiquitin ligase-mediated ubiquitination and subsequent degradation. DNMT1 phosphorylation reduces its DNA-binding activity. Phosphorylation of ESR1 and AIB1/NCOA3 stimulates their activity and coactivation. Phosphorylation of DVL2 and DVL3 regulates WNT3A signaling pathway that controls neurite outgrowth. Phosphorylates NEDD9/HEF1. EIF6 phosphorylation promotes its nuclear export. Triggers down-regulation of dopamine receptors in the forebrain. Activates DCK in vitro by phosphorylation. TOP2A phosphorylation favors DNA cleavable complex formation. May regulate the formation of the mitotic spindle apparatus in extravillous trophoblast. Modulates connexin-43/GJA1 gap junction assembly by phosphorylation. Probably involved in lymphocyte physiology. Regulates fast synaptic transmission mediated by glutamate. The polypeptide is Casein kinase I isoform delta (Csnk1d) (Mus musculus (Mouse)).